Reading from the N-terminus, the 213-residue chain is mRNA-decapping protein OPG121 (213 aa).

Glu16 and Arg50 together coordinate N(7)-methyl-GTP. In terms of domain architecture, Nudix hydrolase spans 30–209 (KDTHVFAACI…EYLSYIYNML (180 aa)). A Nudix box motif is present at residues 111-132 (GKLDKKESIKDCLRRELKEESD). The active-site Nucleophile is Glu126. Mg(2+) is bound by residues Glu126 and Glu130. A N(7)-methyl-GTP-binding site is contributed by Asp151. Mg(2+) is bound at residue Glu183.

It belongs to the Nudix hydrolase family. Mg(2+) serves as cofactor. Requires Mn(2+) as cofactor.

The enzyme catalyses a 5'-end (N(7)-methyl 5'-triphosphoguanosine)-guanosine in mRNA + H2O = a 5'-end phospho-guanosine in mRNA + N(7)-methyl-GDP + 2 H(+). In terms of biological role, decapping enzyme that remove the protective 5'-cap from both host and viral mRNAs to commit transcripts for decay by the cellular exonuclease XRN1. Accelerates viral and cellular mRNA turnover to eliminate competing host mRNAs and allow stage-specific synthesis of viral proteins. Acceleration of the turnover of cellular transcripts may even promote the shutoff of host protein synthesis. The protein is mRNA-decapping protein OPG121 (OPG121) of Vaccinia virus (strain Western Reserve) (VACV).